The chain runs to 161 residues: UPF0178 protein BR1979/BS1330_I1973 (161 aa).

It belongs to the UPF0178 family.

The polypeptide is UPF0178 protein BR1979/BS1330_I1973 (Brucella suis biovar 1 (strain 1330)).